The sequence spans 356 residues: Galactosylgalactosylxylosylprotein 3-beta-glucuronosyltransferase sqv-8 (356 aa).

Residues 1-9 are Cytoplasmic-facing; it reads MFPSRLLEK. A helical; Signal-anchor for type II membrane protein membrane pass occupies residues 10-30; that stretch reads WWLRAFIALVIFFVWQLFYAI. The Lumenal segment spans residues 31 to 356; sequence NRVQSLEEER…LEAHALGVDN (326 aa). 2 N-linked (GlcNAc...) asparagine glycosylation sites follow: Asn93 and Asn173. Asp208 provides a ligand contact to Mn(2+). N-linked (GlcNAc...) asparagine glycosylation is found at Asn246 and Asn272. Glu294 (proton acceptor) is an active-site residue.

Belongs to the glycosyltransferase 43 family.

The protein resides in the membrane. The catalysed reaction is 3-O-(beta-D-galactosyl-(1-&gt;3)-beta-D-galactosyl-(1-&gt;4)-beta-D-xylosyl)-L-seryl-[protein] + UDP-alpha-D-glucuronate = 3-O-(beta-D-GlcA-(1-&gt;3)-beta-D-Gal-(1-&gt;3)-beta-D-Gal-(1-&gt;4)-beta-D-Xyl)-L-seryl-[protein] + UDP + H(+). Glycosyltransferase required for the biosynthesis of the tetrasaccharide (GlcA-Gal-Gal-Xyl-)Ser core linker of heparan sulfate and chondroitin sulfate. May be involved in the biosynthesis of the HNK-1 carbohydrate epitope on glycoproteins. Required for embryonic development. Involved in the elongation of the pharyngeal isthmus during the later stages of embryonic development. Involved in vulval epithelium invagination. The protein is Galactosylgalactosylxylosylprotein 3-beta-glucuronosyltransferase sqv-8 (sqv-8) of Caenorhabditis elegans.